Here is a 670-residue protein sequence, read N- to C-terminus: uncharacterized protein (670 aa).

10 consecutive transmembrane segments (helical) span residues 23–42, 47–69, 76–98, 118–140, 153–170, 381–403, 410–432, 437–454, 461–483, and 493–510; these read YALR…YYLN, YWAM…SKSL, LLGA…FFLL, VAYA…VNIT, VCEV…MMIL, QWDA…SAVA, SLLM…GLMV, LWQF…MQLL, FAAL…NPPV, and NLAK…FAIL.

Belongs to the aromatic acid exporter ArAE (TC 2.A.85) family.

Its subcellular location is the cell membrane. This is an uncharacterized protein from Escherichia coli (strain K12).